The chain runs to 139 residues: Putative nickel-responsive regulator (139 aa).

Ni(2+) is bound by residues His79, His90, His92, and Cys98.

The protein belongs to the transcriptional regulatory CopG/NikR family. Requires Ni(2+) as cofactor.

Transcriptional regulator. This is Putative nickel-responsive regulator from Solidesulfovibrio magneticus (strain ATCC 700980 / DSM 13731 / RS-1) (Desulfovibrio magneticus).